The sequence spans 604 residues: Glucose-methanol-choline family oxidoreductase mfmG (604 aa).

Residues 1-24 form the signal peptide; sequence MYMLRPSSLLLATGLLNQGSSVLA. A glycan (N-linked (GlcNAc...) asparagine) is linked at Asn-32. Residues 44-45 and 65-66 each bind FAD; these read TA and EA. Asn-76 and Asn-97 each carry an N-linked (GlcNAc...) asparagine glycan. 126 to 129 serves as a coordination point for FAD; the sequence is NFMA. N-linked (GlcNAc...) asparagine glycosylation is found at Asn-260, Asn-265, Asn-401, and Asn-460. Residue His-538 is the Proton acceptor of the active site. FAD contacts are provided by residues Ala-572 and 584–585; that span reads PQ.

This sequence belongs to the GMC oxidoreductase family. As to quaternary structure, homodimer. FAD serves as cofactor.

Its function is as follows. Oxidoreductase; part of the gene cluster that mediates the biosynthesis of the phthalide-terpenoid hybrid 11'-O-desmethylfendlerol. MfmG seems not to be involved directly in the biosynthesis of 11'-O-desmethylfendlerol and its role has still to be determined. The biosynthesis of 11'-O-desmethylfendlerol begins with the NR-PKS mfmB that forms 3,5-dimethylorsellinic acid (DMOA), which is then transformed into the phthalide 5,7-dihydroxy-4-(hydroxymethyl)-6-methylphthalide by the cytochrome P450 monooxygenase mfmA and the hydrolase mfmC. Subsequently, the methyltransferase mfmE catalyzes 7-O-methylation to yield 5-hydroxy-4-(hydroxymethyl)-7-methoxy-6-methylphthalide, which undergoes C-3 hydroxylation by the cytochrome P450 monooxygenase mfmF. The resultant cyclopolic acid (2,5-dihydroxy-4-(hydroxymethyl)-7-methoxy-6-methylphthalide) is then farnesylated by the DMATS-type prenyltransferase mfmD to afford 5-O-farnesylcyclopolic acid. Finally, the Pyr4-family terpene cyclase mfmH cyclizes the farnesyl moiety of 5-O-farnesylcyclopolic acid into a drimane-like structure, thus completing the biosynthesis of 11'-O-desmethylfendlerol. This Annulohypoxylon moriforme (Filamentous fungus) protein is Glucose-methanol-choline family oxidoreductase mfmG.